Reading from the N-terminus, the 195-residue chain is Protein aq_1444 (195 aa).

Residues 1–191 (MDIRELVHLG…EKEPFGEVER (191 aa)) enclose the AMMECR1 domain.

This is Protein aq_1444 from Aquifex aeolicus (strain VF5).